Consider the following 541-residue polypeptide: Eukaryotic translation initiation factor 3 subunit D-1 (541 aa).

Positions valine 98 to leucine 136 are disordered. Over residues lysine 100–asparagine 120 the composition is skewed to basic residues.

The protein belongs to the eIF-3 subunit D family. Component of the eukaryotic translation initiation factor 3 (eIF-3) complex. The eIF-3 complex interacts with pix.

It localises to the cytoplasm. Functionally, mRNA cap-binding component of the eukaryotic translation initiation factor 3 (eIF-3) complex, which is involved in protein synthesis of a specialized repertoire of mRNAs and, together with other initiation factors, stimulates binding of mRNA and methionyl-tRNAi to the 40S ribosome. The eIF-3 complex specifically targets and initiates translation of a subset of mRNAs involved in cell proliferation. In the eIF-3 complex, eif3d specifically recognizes and binds the 7-methylguanosine cap of a subset of mRNAs. This is Eukaryotic translation initiation factor 3 subunit D-1 from Drosophila persimilis (Fruit fly).